Consider the following 902-residue polypeptide: Protein translocase subunit SecA (902 aa).

Residues Q87, 105-109 (GEGKT), and D512 contribute to the ATP site. The segment at 850 to 902 (RLAKQQQLSHEVTKESQMSAVDGQVASGKKVGRNEPCPCGSGKKYKHCHGKLG) is disordered. The segment covering 853–868 (KQQQLSHEVTKESQMS) has biased composition (polar residues). Residues C886, C888, C897, and H898 each contribute to the Zn(2+) site. Basic residues predominate over residues 892–902 (KKYKHCHGKLG).

This sequence belongs to the SecA family. Monomer and homodimer. Part of the essential Sec protein translocation apparatus which comprises SecA, SecYEG and auxiliary proteins SecDF-YajC and YidC. Zn(2+) is required as a cofactor.

It is found in the cell inner membrane. The protein resides in the cytoplasm. The enzyme catalyses ATP + H2O + cellular proteinSide 1 = ADP + phosphate + cellular proteinSide 2.. Part of the Sec protein translocase complex. Interacts with the SecYEG preprotein conducting channel. Has a central role in coupling the hydrolysis of ATP to the transfer of proteins into and across the cell membrane, serving both as a receptor for the preprotein-SecB complex and as an ATP-driven molecular motor driving the stepwise translocation of polypeptide chains across the membrane. This chain is Protein translocase subunit SecA, found in Proteus mirabilis (strain HI4320).